An 832-amino-acid polypeptide reads, in one-letter code: Prickle-like protein 1-B (832 aa).

One can recognise a PET domain in the interval Phe-14–Met-122. LIM zinc-binding domains lie at Ala-124–Lys-188, Pro-189–Glu-249, and Tyr-250–His-313. Disordered regions lie at residues Val-312–Cys-346, Gln-428–Asn-455, Ile-602–Asn-701, and Cys-766–Ser-832. Basic and acidic residues-rich tracts occupy residues Glu-432–Arg-453 and Cys-603–Met-614. Basic residues-rich tracts occupy residues Arg-669 to Lys-680 and Thr-816 to Ser-832. Cys-829 is modified (cysteine methyl ester). The S-farnesyl cysteine moiety is linked to residue Cys-829. A propeptide spans Ile-830 to Ser-832 (removed in mature form).

The protein belongs to the prickle / espinas / testin family. In terms of assembly, interacts with dvl2/dsh and mapk8/jnk1. Expressed in the dorsal marginal zone of early gastrulae (stage 10). As gastrulation proceeds, expression expands to include the lateral and ventral marginal zones, excluding the few rows of cells above the blastopore lip. Expression moves dorsally with gastrulation cell movements, and by the end of gastrulation expression is seen in dorsal mesoderm and posterior but not anterior neural ectoderm. Expression becomes down-regulated in mesoderm but remains strong in posterior ectoderm through the neurula stages. During tailbud stages, expressed in the pronephric duct, tailbud, tailtip and forming somites. In the most posterior regions, expressed in notochord and in the floorplate of the neural tube with weak expression in the roofplate. At stage 30, expressed in a complex pattern in the head including strong expression in the lens and otic vesicle.

The protein resides in the cell membrane. Its function is as follows. Acts in a planar cell polarity (PCP) complex; polarization along the apical/basal axis of epithelial cells. Regulates the polarized assembly of fibronectrin on the surface of the mesoderm during gastrulation. Essential for gastrulation cell movements, cooperating with dvl2/dsh to activate jnk. Acts together with tes to control axial elongation. This is Prickle-like protein 1-B (prickle1-b) from Xenopus laevis (African clawed frog).